Reading from the N-terminus, the 630-residue chain is Putative lipase atg15 (630 aa).

Residues Met1–Thr20 are Cytoplasmic-facing. Residues Leu21 to Phe40 traverse the membrane as a helical; Signal-anchor for type II membrane protein segment. The Lumenal segment spans residues Asn41 to Ile630. 4 N-linked (GlcNAc...) asparagine glycosylation sites follow: Asn200, Asn222, Asn280, and Asn304. The active-site Charge relay system is Ser320. N-linked (GlcNAc...) asparagine glycosylation occurs at Asn466. Polar residues predominate over residues Ser577–Ser589. The interval Ser577–Gly599 is disordered.

This sequence belongs to the AB hydrolase superfamily. Lipase family. Binds to both phosphatidylinositol (PI) and phosphatidylinositol 3,5-bisphosphate (PIP2).

Its subcellular location is the endosome. It localises to the multivesicular body membrane. The protein localises to the prevacuolar compartment membrane. It carries out the reaction a triacylglycerol + H2O = a diacylglycerol + a fatty acid + H(+). Its function is as follows. Lipase which is essential for lysis of subvacuolar cytoplasm to vacuole targeted bodies and intravacuolar autophagic bodies. Involved in the lysis of intravacuolar multivesicular body (MVB) vesicles. The intravacuolar membrane disintegration by atg15 is critical to life span extension. The sequence is that of Putative lipase atg15 (atg15) from Aspergillus clavatus (strain ATCC 1007 / CBS 513.65 / DSM 816 / NCTC 3887 / NRRL 1 / QM 1276 / 107).